The following is a 390-amino-acid chain: GTPase Obg (390 aa).

Residues 1 to 159 (MKFVDEATIK…RELRLELLLL (159 aa)) enclose the Obg domain. Positions 160–333 (ADVGMLGLPN…LCDELADFMD (174 aa)) constitute an OBG-type G domain. GTP contacts are provided by residues 166 to 173 (GLPNAGKS), 191 to 195 (FTTLI), 213 to 216 (DIPG), 283 to 286 (NKTD), and 314 to 316 (AAV). Positions 173 and 193 each coordinate Mg(2+).

This sequence belongs to the TRAFAC class OBG-HflX-like GTPase superfamily. OBG GTPase family. In terms of assembly, monomer. Requires Mg(2+) as cofactor.

Its subcellular location is the cytoplasm. In terms of biological role, an essential GTPase which binds GTP, GDP and possibly (p)ppGpp with moderate affinity, with high nucleotide exchange rates and a fairly low GTP hydrolysis rate. Plays a role in control of the cell cycle, stress response, ribosome biogenesis and in those bacteria that undergo differentiation, in morphogenesis control. The chain is GTPase Obg from Aliivibrio fischeri (strain ATCC 700601 / ES114) (Vibrio fischeri).